The primary structure comprises 324 residues: Fructose-1,6-bisphosphatase class 1 (324 aa).

Glutamate 88, aspartate 107, leucine 109, and aspartate 110 together coordinate Mg(2+). Substrate is bound by residues 110–113 (DGSS), asparagine 199, and lysine 265. Mg(2+) is bound at residue glutamate 271.

Belongs to the FBPase class 1 family. Homotetramer. Requires Mg(2+) as cofactor.

The protein resides in the cytoplasm. It carries out the reaction beta-D-fructose 1,6-bisphosphate + H2O = beta-D-fructose 6-phosphate + phosphate. It functions in the pathway carbohydrate biosynthesis; gluconeogenesis. The chain is Fructose-1,6-bisphosphatase class 1 from Neisseria meningitidis serogroup C (strain 053442).